The sequence spans 589 residues: Probable galacturonosyltransferase 6 (589 aa).

Topologically, residues 1-6 (MKQIRR) are cytoplasmic. A helical; Signal-anchor for type II membrane protein membrane pass occupies residues 7–27 (WQRILILALLSISVFAPLIFV). Residues 28-589 (SNRLKSITPV…TYLQQCNLQA (562 aa)) lie on the Lumenal side of the membrane. Residues asparagine 83 and asparagine 126 are each glycosylated (N-linked (GlcNAc...) asparagine). Residues 127–151 (KTDFKPPLSKGEKNTRVQPDRATDV) are disordered. Basic and acidic residues predominate over residues 136-151 (KGEKNTRVQPDRATDV). N-linked (GlcNAc...) asparagine glycans are attached at residues asparagine 317 and asparagine 454.

Belongs to the glycosyltransferase 8 family. Expressed in roots, inflorescences, siliques, leaves and stems.

The protein resides in the golgi apparatus membrane. It participates in glycan metabolism; pectin biosynthesis. In terms of biological role, probably involved in pectin biosynthesis in cell walls. In Arabidopsis thaliana (Mouse-ear cress), this protein is Probable galacturonosyltransferase 6 (GAUT6).